The sequence spans 371 residues: Envelope glycoprotein M (371 aa).

Over M1–T13 the chain is Intravirion. A helical transmembrane segment spans residues W14–L34. At S35–C79 the chain is on the virion surface side. Residues Y80–I100 traverse the membrane as a helical segment. Residues K101–L126 are Intravirion-facing. A helical membrane pass occupies residues T127–F147. The Virion surface segment spans residues R148 to S151. A helical transmembrane segment spans residues M152–V172. Residues T173–T200 are Intravirion-facing. A helical transmembrane segment spans residues L201–L221. Topologically, residues C222–A239 are virion surface. The chain crosses the membrane as a helical span at residues V240–F260. The Intravirion segment spans residues Q261–K264. Residues V265–V285 form a helical membrane-spanning segment. The Virion surface portion of the chain corresponds to Q286 to G298. Residues I299–V319 traverse the membrane as a helical segment. The Intravirion segment spans residues R320–A371. A disordered region spans residues L346–A371. Residues S347–E359 are compositionally biased toward basic and acidic residues. A compositionally biased stretch (acidic residues) spans E360 to A371.

This sequence belongs to the herpesviridae glycoprotein M family. As to quaternary structure, interacts (via N-terminus) with gN (via N-terminus). The gM-gN heterodimer forms the gCII complex.

Its subcellular location is the virion membrane. The protein localises to the host Golgi apparatus. It is found in the host trans-Golgi network. It localises to the host endosome membrane. The protein resides in the host nucleus inner membrane. Envelope glycoprotein important for virion assembly and egress. Plays a role in the correct incorporation of gH-gL into virion membrane. Directs the glycoprotein N (gN) to the host trans-Golgi network. The sequence is that of Envelope glycoprotein M from Homo sapiens (Human).